A 649-amino-acid chain; its full sequence is Echinoderm microtubule-associated protein-like 2 (649 aa).

The interval 10-649 is tandem atypical propeller in EMLs; that stretch reads KEVIFSVEDG…DTSVLQWRVV (640 aa). 2 coiled-coil regions span residues 13-58 and 73-114; these read IFSV…LKLE and YLLP…LAIH. WD repeat units lie at residues 56-93, 97-144, 151-192, 195-234, 241-280, 285-323, 369-406, 410-447, 452-489, 495-535, 564-602, and 609-648; these read KLEW…LYSV, RQRH…IWDS, HVLG…VWDW, ETKV…FWTL, KRQG…VWGK, ITQA…LWGS, FSLL…LWSS, QPLW…LLDT, LVAI…VYTV, KVSR…YWDP, FGIW…LFSY, and ALSH…QWRV.

It belongs to the WD repeat EMAP family. In terms of assembly, homotrimer; self-association is mediated by the N-terminal coiled coil. Interacts with GRID2 and may also interact with GRID1. Interacts with EML3. Binds unpolymerized tubulins via its WD repeat region. As to expression, ubiquitous.

The protein localises to the cytoplasm. It localises to the cytoskeleton. Its subcellular location is the spindle. Tubulin binding protein that inhibits microtubule nucleation and growth, resulting in shorter microtubules. This is Echinoderm microtubule-associated protein-like 2 (EML2) from Homo sapiens (Human).